A 544-amino-acid polypeptide reads, in one-letter code: BTB/POZ domain-containing protein At2g13690 (544 aa).

2 disordered regions span residues 34–66 (ASPDTRSISSRNHIPAKSQQQRPKLVPCSPQSS) and 82–111 (LSPGRVSPIDSDPTVTTMQETETTQEEEDD). Residues 37–55 (DTRSISSRNHIPAKSQQQR) are compositionally biased toward polar residues. The span at 93 to 103 (DPTVTTMQETE) shows a compositional bias: low complexity. The region spanning 142–225 (YDARLSLKGR…MFEESNVIIK (84 aa)) is the BTB domain.

Its pathway is protein modification; protein ubiquitination. Functionally, may act as a substrate-specific adapter of an E3 ubiquitin-protein ligase complex (CUL3-RBX1-BTB) which mediates the ubiquitination and subsequent proteasomal degradation of target proteins. The sequence is that of BTB/POZ domain-containing protein At2g13690 (PRL1-IFG) from Arabidopsis thaliana (Mouse-ear cress).